The chain runs to 115 residues: MSIESDMIHVEVVYALPHEQRVFNLVVNNHATVEEIIRQSGVLELYPEIDLAKNKVGVFSRNVKLDATVRDKDRIEIYRPLLADPKEIRRKRAEQAKAAGNADPVTGGKPNALRK.

Positions 92–115 are disordered; the sequence is RAEQAKAAGNADPVTGGKPNALRK.

It belongs to the UPF0125 (RnfH) family.

In Vibrio parahaemolyticus serotype O3:K6 (strain RIMD 2210633), this protein is UPF0125 protein VP0646.